The sequence spans 189 residues: Lipid A acyltransferase PagP (189 aa).

Positions methionine 1–alanine 24 are cleaved as a signal peptide. Residues histidine 61, aspartate 104, and serine 105 contribute to the active site.

It belongs to the lipid A palmitoyltransferase family. As to quaternary structure, homodimer.

It is found in the cell outer membrane. The enzyme catalyses a lipid A + a 1,2-diacyl-sn-glycero-3-phosphocholine = a hepta-acyl lipid A + a 2-acyl-sn-glycero-3-phosphocholine. The catalysed reaction is a lipid IVA + a 1,2-diacyl-sn-glycero-3-phosphocholine = a lipid IVB + a 2-acyl-sn-glycero-3-phosphocholine. It carries out the reaction a lipid IIA + a 1,2-diacyl-sn-glycero-3-phosphocholine = a lipid IIB + a 2-acyl-sn-glycero-3-phosphocholine. Transfers a fatty acid residue from the sn-1 position of a phospholipid to the N-linked hydroxyfatty acid chain on the proximal unit of lipid A or its precursors. The sequence is that of Lipid A acyltransferase PagP from Klebsiella pneumoniae subsp. pneumoniae (strain ATCC 700721 / MGH 78578).